The sequence spans 473 residues: Glycogen synthase (473 aa).

An ADP-alpha-D-glucose-binding site is contributed by K15.

It belongs to the glycosyltransferase 1 family. Bacterial/plant glycogen synthase subfamily.

The enzyme catalyses [(1-&gt;4)-alpha-D-glucosyl](n) + ADP-alpha-D-glucose = [(1-&gt;4)-alpha-D-glucosyl](n+1) + ADP + H(+). Its pathway is glycan biosynthesis; glycogen biosynthesis. Synthesizes alpha-1,4-glucan chains using ADP-glucose. This Flavobacterium johnsoniae (strain ATCC 17061 / DSM 2064 / JCM 8514 / BCRC 14874 / CCUG 350202 / NBRC 14942 / NCIMB 11054 / UW101) (Cytophaga johnsonae) protein is Glycogen synthase.